The chain runs to 293 residues: 33 kDa chaperonin (293 aa).

Disulfide bonds link C238-C240 and C271-C274.

Belongs to the HSP33 family. Under oxidizing conditions two disulfide bonds are formed involving the reactive cysteines. Under reducing conditions zinc is bound to the reactive cysteines and the protein is inactive.

The protein resides in the cytoplasm. Its function is as follows. Redox regulated molecular chaperone. Protects both thermally unfolding and oxidatively damaged proteins from irreversible aggregation. Plays an important role in the bacterial defense system toward oxidative stress. This chain is 33 kDa chaperonin, found in Clostridium beijerinckii (strain ATCC 51743 / NCIMB 8052) (Clostridium acetobutylicum).